Consider the following 483-residue polypeptide: Probable cytosol aminopeptidase (483 aa).

Residues Lys244 and Asp249 each coordinate Mn(2+). Lys256 is a catalytic residue. Positions 267, 326, and 328 each coordinate Mn(2+). Arg330 is a catalytic residue.

It belongs to the peptidase M17 family. Requires Mn(2+) as cofactor.

Its subcellular location is the cytoplasm. The enzyme catalyses Release of an N-terminal amino acid, Xaa-|-Yaa-, in which Xaa is preferably Leu, but may be other amino acids including Pro although not Arg or Lys, and Yaa may be Pro. Amino acid amides and methyl esters are also readily hydrolyzed, but rates on arylamides are exceedingly low.. It carries out the reaction Release of an N-terminal amino acid, preferentially leucine, but not glutamic or aspartic acids.. Functionally, presumably involved in the processing and regular turnover of intracellular proteins. Catalyzes the removal of unsubstituted N-terminal amino acids from various peptides. In Campylobacter jejuni subsp. jejuni serotype O:2 (strain ATCC 700819 / NCTC 11168), this protein is Probable cytosol aminopeptidase.